The chain runs to 509 residues: Histidine--tRNA ligase, cytoplasmic (509 aa).

N-acetylalanine is present on Ala2. Residues 3 to 59 (DRAALEELVRLQGAHVRGLKEQKASAEQIEEEVTKLLKLKAQLGQDEGKQKFVLKTP) form the WHEP-TRS domain. Ser66 bears the Phosphoserine mark. L-histidine is bound by residues 130–132 (DLT), Arg157, Gln173, Asp177, Arg326, and 330–331 (YY). At Ser356 the chain carries Phosphoserine.

This sequence belongs to the class-II aminoacyl-tRNA synthetase family. Homodimer.

It localises to the cytoplasm. It carries out the reaction tRNA(His) + L-histidine + ATP = L-histidyl-tRNA(His) + AMP + diphosphate + H(+). Its function is as follows. Catalyzes the ATP-dependent ligation of histidine to the 3'-end of its cognate tRNA, via the formation of an aminoacyl-adenylate intermediate (His-AMP). Plays a role in axon guidance. The sequence is that of Histidine--tRNA ligase, cytoplasmic (Hars1) from Mus musculus (Mouse).